A 248-amino-acid polypeptide reads, in one-letter code: 3-deoxy-manno-octulosonate cytidylyltransferase (248 aa).

Belongs to the KdsB family.

The protein resides in the cytoplasm. It catalyses the reaction 3-deoxy-alpha-D-manno-oct-2-ulosonate + CTP = CMP-3-deoxy-beta-D-manno-octulosonate + diphosphate. The protein operates within nucleotide-sugar biosynthesis; CMP-3-deoxy-D-manno-octulosonate biosynthesis; CMP-3-deoxy-D-manno-octulosonate from 3-deoxy-D-manno-octulosonate and CTP: step 1/1. It participates in bacterial outer membrane biogenesis; lipopolysaccharide biosynthesis. Activates KDO (a required 8-carbon sugar) for incorporation into bacterial lipopolysaccharide in Gram-negative bacteria. This chain is 3-deoxy-manno-octulosonate cytidylyltransferase, found in Chlorobaculum parvum (strain DSM 263 / NCIMB 8327) (Chlorobium vibrioforme subsp. thiosulfatophilum).